Consider the following 241-residue polypeptide: Uridylate kinase (241 aa).

ATP is bound at residue 12–15 (KLSG). The segment at 20–25 (GDKGQG) is involved in allosteric activation by GTP. UMP is bound at residue Gly54. Residues Gly55 and Arg59 each coordinate ATP. Residues Asp74 and 135–142 (TGSPYFST) each bind UMP. ATP is bound by residues Asn163, Tyr169, and Asp172.

This sequence belongs to the UMP kinase family. In terms of assembly, homohexamer.

It is found in the cytoplasm. It catalyses the reaction UMP + ATP = UDP + ADP. Its pathway is pyrimidine metabolism; CTP biosynthesis via de novo pathway; UDP from UMP (UMPK route): step 1/1. Allosterically activated by GTP. Inhibited by UTP. Functionally, catalyzes the reversible phosphorylation of UMP to UDP. The chain is Uridylate kinase from Leuconostoc mesenteroides subsp. mesenteroides (strain ATCC 8293 / DSM 20343 / BCRC 11652 / CCM 1803 / JCM 6124 / NCDO 523 / NBRC 100496 / NCIMB 8023 / NCTC 12954 / NRRL B-1118 / 37Y).